Here is a 271-residue protein sequence, read N- to C-terminus: MICFPNAKINLGLNVVSKRPDGYHNIETIFYPIPVRDALEIVASDRTCFTQTGIPVDAPQEKNLVIKALNALKTRYEIPPLEIHLLKAIPFGAGLGGGSADAAFMLKLVNDFCGLDIHPDELEAIASTIGADCPFFIRNTPVFATGTGNQFEPVDLSLKDYYLCLVKPDVAVSTPEAYSMVTPAAPETSLKEIIRLPVSEWKERMVNDFERSVFPRHPVIERIKDTLYEGGALYAAMSGSGSSVFGLFEKPTHFKEQSLFSDCFLWEGQLS.

The active site involves Lys8. ATP is bound at residue Pro90 to Ala100. Asp132 is an active-site residue.

The protein belongs to the GHMP kinase family. IspE subfamily.

It carries out the reaction 4-CDP-2-C-methyl-D-erythritol + ATP = 4-CDP-2-C-methyl-D-erythritol 2-phosphate + ADP + H(+). It functions in the pathway isoprenoid biosynthesis; isopentenyl diphosphate biosynthesis via DXP pathway; isopentenyl diphosphate from 1-deoxy-D-xylulose 5-phosphate: step 3/6. Functionally, catalyzes the phosphorylation of the position 2 hydroxy group of 4-diphosphocytidyl-2C-methyl-D-erythritol. In Parabacteroides distasonis (strain ATCC 8503 / DSM 20701 / CIP 104284 / JCM 5825 / NCTC 11152), this protein is 4-diphosphocytidyl-2-C-methyl-D-erythritol kinase.